A 410-amino-acid polypeptide reads, in one-letter code: Diguanylate cyclase DgcM (410 aa).

PAS domains follow at residues 3–70 and 129–198; these read THNF…NQHD and GFYA…HLPG. In terms of domain architecture, PAC spans 199 to 251; the sequence is GHKPLNFVHKLADGSTRHVQTYAGPIEIYGDKLMLCIVHDITEQKRLEEQLEH. Positions 283–410 constitute a GGDEF domain; the sequence is QDYSLLLIDT…NDGRNRVLAA (128 aa). Residue Asp291 coordinates Mg(2+). Substrate contacts are provided by Asn299, His304, and Asp308. Glu334 is a binding site for Mg(2+). Residue Glu334 is the Proton acceptor of the active site.

As to quaternary structure, forms homodimers and homotetramers. Interacts with PdeR and MlrA. The cofactor is Mg(2+).

It carries out the reaction 2 GTP = 3',3'-c-di-GMP + 2 diphosphate. The protein operates within purine metabolism; 3',5'-cyclic di-GMP biosynthesis. Activity is inhibited by the phosphodiesterase PdeR. Inhibition is relieved by high cellular c-di-GMP levels. Part of a signaling cascade that regulates curli biosynthesis. The cascade is composed of two cyclic-di-GMP (c-di-GMP) control modules, in which c-di-GMP controlled by the DgcE/PdeH pair (module I) regulates the activity of the DgcM/PdeR pair (module II), which in turn regulates activity of the transcription factor MlrA and expression of the master biofilm regulator csgD. DgcM stimulates activity of MlrA by direct interaction, leading to the transcription of csgD. It also catalyzes the synthesis of c-di-GMP via the condensation of 2 GTP molecules, which contributes to the c-di-GMP pool generated by module I in a positive feedback loop. Production of c-di-GMP contributes to but is not essential for MlrA activation. In Escherichia coli (strain K12), this protein is Diguanylate cyclase DgcM.